The chain runs to 280 residues: UDP-3-O-acyl-N-acetylglucosamine deacetylase (280 aa).

Histidine 79, histidine 237, and aspartate 241 together coordinate Zn(2+). Histidine 264 serves as the catalytic Proton donor.

Belongs to the LpxC family. It depends on Zn(2+) as a cofactor.

The catalysed reaction is a UDP-3-O-[(3R)-3-hydroxyacyl]-N-acetyl-alpha-D-glucosamine + H2O = a UDP-3-O-[(3R)-3-hydroxyacyl]-alpha-D-glucosamine + acetate. It functions in the pathway glycolipid biosynthesis; lipid IV(A) biosynthesis; lipid IV(A) from (3R)-3-hydroxytetradecanoyl-[acyl-carrier-protein] and UDP-N-acetyl-alpha-D-glucosamine: step 2/6. Its function is as follows. Catalyzes the hydrolysis of UDP-3-O-myristoyl-N-acetylglucosamine to form UDP-3-O-myristoylglucosamine and acetate, the committed step in lipid A biosynthesis. The protein is UDP-3-O-acyl-N-acetylglucosamine deacetylase of Chlamydia abortus (strain DSM 27085 / S26/3) (Chlamydophila abortus).